The chain runs to 427 residues: Zinc finger protein DPF3 (427 aa).

The disordered stretch occupies residues 182–244; the sequence is LENDENADEV…NDAASQDDHD (63 aa). Residues 184–199 show a composition bias toward acidic residues; it reads NDENADEVNEEEDLEE. Residues 233–244 show a composition bias toward basic and acidic residues; that stretch reads RRNDAASQDDHD. The C2H2-type zinc-finger motif lies at 247-270; it reads YVCDICGKRYKNRPGLSYHYAHTH. A disordered region spans residues 272-301; the sequence is ASEEGDEAREQETRSSPVHRNENHKPQKGP. The segment covering 279-296 has biased composition (basic and acidic residues); the sequence is AREQETRSSPVHRNENHK. PHD-type zinc fingers lie at residues 308 to 368 and 365 to 415; these read NNYC…CKSC and CKSC…CREL.

This sequence belongs to the requiem/DPF family. As to quaternary structure, component of the BAF complex. Interacts with acetylated histones H3 and H4. Component of neuron-specific chromatin remodeling complex (nBAF complex), a subfamily of ATP-dependent SWI/SNF chromatin remodeling complexes. Expressed in the heart and somites.

The protein localises to the nucleus. Functionally, muscle-specific component of the BAF complex, a multiprotein complex involved in transcriptional activation and repression of select genes by chromatin remodeling (alteration of DNA-nucleosome topology). Specifically binds acetylated lysines on histone 3 and 4. In the complex, it acts as a tissue-specific anchor between histone acetylations and methylations and chromatin remodeling. It thereby probably plays an essential role in heart and skeletal muscle development. Belongs to the neuron-specific chromatin remodeling complex (nBAF complex) and plays a role in neural development. This Gallus gallus (Chicken) protein is Zinc finger protein DPF3 (DPF3).